Reading from the N-terminus, the 191-residue chain is Elongation factor P (191 aa).

The protein belongs to the elongation factor P family.

The protein localises to the cytoplasm. It functions in the pathway protein biosynthesis; polypeptide chain elongation. In terms of biological role, involved in peptide bond synthesis. Stimulates efficient translation and peptide-bond synthesis on native or reconstituted 70S ribosomes in vitro. Probably functions indirectly by altering the affinity of the ribosome for aminoacyl-tRNA, thus increasing their reactivity as acceptors for peptidyl transferase. In Janthinobacterium sp. (strain Marseille) (Minibacterium massiliensis), this protein is Elongation factor P.